The following is a 412-amino-acid chain: Alpha-1-antitrypsin 1-3 (412 aa).

The N-terminal stretch at 1–24 is a signal peptide; that stretch reads MTPSISWGLLLLAGLCCLVPSFLA. N-linked (GlcNAc...) asparagine glycosylation is found at asparagine 64, asparagine 101, and asparagine 265. Residues 368–387 form an RCL region; that stretch reads AVTVLLAVPYSMPPILRFDH.

This sequence belongs to the serpin family.

The protein resides in the secreted. Functionally, inhibitor of serine proteases. Can inhibit trypsin and chymotrypsin; relatively ineffective against elastase. The polypeptide is Alpha-1-antitrypsin 1-3 (Serpina1c) (Mus musculus (Mouse)).